Reading from the N-terminus, the 361-residue chain is MPVNPPPTTPTDNLNFNKTVEFKFPQELGKPPLRKGVAPKLLLGHLVVLPIYLSGGTPMGGHDGIQEDLLIVPQLLDTTPDKLNLNLISRHPDVRLTYNTLKLPYRNIRRKAEEVKGIPGVPVTLGRERRTQWHNVVFQDTVVKRHLNPVVQDLLKLRGAVRGETDSPWLKRGYDPRVADHIHYGQLVGKTHNAHIRLPRKVVEEFIPVPGKSLIDLVHDNYHLALRGPFPNLLHNVQEPKTASGGPGNGRCDLVGSAVRNDILNYRVTGVLLEFVDHILRRDSLPRSWGPYNQQVGWGGAVEDVPQVLADSTHLFLSVLQGVRHKERAEDIPVFEKSRSLLKHLQLPAIQLYNSKPHFYM.

This is an uncharacterized protein from Methanothermobacter thermautotrophicus (Methanobacterium thermoformicicum).